The sequence spans 879 residues: DNA replication licensing factor mcm3 (879 aa).

Residues Val-306–Leu-513 form the MCM domain. ATP is bound at residue Gly-356–Ser-363. Residues Ser-488 to Asp-491 carry the Arginine finger motif. The tract at residues Arg-679–Leu-778 is disordered. Acidic residues predominate over residues Gly-690 to Asp-713. A compositionally biased stretch (low complexity) spans Thr-732–Ser-752. The span at Asn-754 to Leu-778 shows a compositional bias: polar residues.

The protein belongs to the MCM family. Component of the mcm2-7 complex. The complex forms a toroidal hexameric ring with the proposed subunit order mcm2-mcm6-mcm4-mcm7-mcm3-mcm5. The heterodimers of mcm4/mcm6 and mcm3/mcm5 interact with mcm2 and mcm7.

It is found in the nucleus. The enzyme catalyses ATP + H2O = ADP + phosphate + H(+). Functionally, acts as a component of the mcm2-7 complex (mcm complex) which is the putative replicative helicase essential for 'once per cell cycle' DNA replication initiation and elongation in eukaryotic cells. The active ATPase sites in the mcm2-7 ring are formed through the interaction surfaces of two neighboring subunits such that a critical structure of a conserved arginine finger motif is provided in trans relative to the ATP-binding site of the Walker A box of the adjacent subunit. The six ATPase active sites, however, are likely to contribute differentially to the complex helicase activity. The chain is DNA replication licensing factor mcm3 (mcm3) from Schizosaccharomyces pombe (strain 972 / ATCC 24843) (Fission yeast).